We begin with the raw amino-acid sequence, 148 residues long: Lysozyme-like protein 1 (148 aa).

The signal sequence occupies residues 1–19 (MKSVGVFALIISFSIVAES). Residues 20-148 (KIYTRCKLAK…SEWKRGCEVS (129 aa)) form the C-type lysozyme domain. 4 disulfide bridges follow: C25–C145, C49–C133, C83–C98, and C94–C112. E54 is an active-site residue. The N-linked (GlcNAc...) asparagine glycan is linked to N58. D71 is a catalytic residue.

It belongs to the glycosyl hydrolase 22 family. Monomer.

It localises to the secreted. It catalyses the reaction Hydrolysis of (1-&gt;4)-beta-linkages between N-acetylmuramic acid and N-acetyl-D-glucosamine residues in a peptidoglycan and between N-acetyl-D-glucosamine residues in chitodextrins.. The protein is Lysozyme-like protein 1 (Lyzl1) of Mus musculus (Mouse).